Consider the following 239-residue polypeptide: Ribonuclease PH (239 aa).

Phosphate-binding positions include R86 and 124–126; that span reads GTR.

It belongs to the RNase PH family. Homohexameric ring arranged as a trimer of dimers.

It carries out the reaction tRNA(n+1) + phosphate = tRNA(n) + a ribonucleoside 5'-diphosphate. In terms of biological role, phosphorolytic 3'-5' exoribonuclease that plays an important role in tRNA 3'-end maturation. Removes nucleotide residues following the 3'-CCA terminus of tRNAs; can also add nucleotides to the ends of RNA molecules by using nucleoside diphosphates as substrates, but this may not be physiologically important. Probably plays a role in initiation of 16S rRNA degradation (leading to ribosome degradation) during starvation. This is Ribonuclease PH from Rickettsia akari (strain Hartford).